A 220-amino-acid polypeptide reads, in one-letter code: Large ribosomal subunit protein uL3 (220 aa).

It belongs to the universal ribosomal protein uL3 family. As to quaternary structure, part of the 50S ribosomal subunit. Forms a cluster with proteins L14 and L19.

Functionally, one of the primary rRNA binding proteins, it binds directly near the 3'-end of the 23S rRNA, where it nucleates assembly of the 50S subunit. In Staphylococcus carnosus (strain TM300), this protein is Large ribosomal subunit protein uL3.